The sequence spans 185 residues: Orotate phosphoribosyltransferase (185 aa).

Residues Arg-98, Lys-99, Lys-102, His-104, and 128–136 (EDVTTTGGS) each bind 5-phospho-alpha-D-ribose 1-diphosphate. Positions 132 and 160 each coordinate orotate.

This sequence belongs to the purine/pyrimidine phosphoribosyltransferase family. PyrE subfamily. As to quaternary structure, homodimer. Requires Mg(2+) as cofactor.

It carries out the reaction orotidine 5'-phosphate + diphosphate = orotate + 5-phospho-alpha-D-ribose 1-diphosphate. It functions in the pathway pyrimidine metabolism; UMP biosynthesis via de novo pathway; UMP from orotate: step 1/2. Functionally, catalyzes the transfer of a ribosyl phosphate group from 5-phosphoribose 1-diphosphate to orotate, leading to the formation of orotidine monophosphate (OMP). This is Orotate phosphoribosyltransferase from Bradyrhizobium sp. (strain BTAi1 / ATCC BAA-1182).